The chain runs to 860 residues: Leucine--tRNA ligase (860 aa).

Residues 42-52 (PYPSGRLHMGH) carry the 'HIGH' region motif. Positions 619 to 623 (KMSKS) match the 'KMSKS' region motif. Lys-622 is a binding site for ATP.

This sequence belongs to the class-I aminoacyl-tRNA synthetase family.

The protein localises to the cytoplasm. It catalyses the reaction tRNA(Leu) + L-leucine + ATP = L-leucyl-tRNA(Leu) + AMP + diphosphate. The sequence is that of Leucine--tRNA ligase from Salmonella agona (strain SL483).